Here is a 447-residue protein sequence, read N- to C-terminus: Argininosuccinate synthase (447 aa).

Residues 17–25 (AFSGGLDTS) and Ala-43 each bind ATP. Tyr-99 is a binding site for L-citrulline. ATP is bound by residues Gly-129 and Thr-131. L-aspartate-binding residues include Thr-131, Asn-135, and Asp-136. Asn-135 lines the L-citrulline pocket. Residue Asp-136 coordinates ATP. L-citrulline is bound by residues Arg-139 and Ser-192. Asp-194 is a binding site for ATP. 3 residues coordinate L-citrulline: Thr-201, Glu-203, and Glu-280.

This sequence belongs to the argininosuccinate synthase family. Type 2 subfamily. In terms of assembly, homotetramer.

The protein resides in the cytoplasm. The enzyme catalyses L-citrulline + L-aspartate + ATP = 2-(N(omega)-L-arginino)succinate + AMP + diphosphate + H(+). Its pathway is amino-acid biosynthesis; L-arginine biosynthesis; L-arginine from L-ornithine and carbamoyl phosphate: step 2/3. This Escherichia coli O1:K1 / APEC protein is Argininosuccinate synthase.